A 267-amino-acid chain; its full sequence is Geranylgeranylglyceryl phosphate synthase (267 aa).

Mg(2+) contacts are provided by Asp-23 and Ser-52. Sn-glycerol 1-phosphate-binding positions include 173-179 (YLEAGSG), 205-206 (GG), and 227-228 (GT).

The protein belongs to the GGGP/HepGP synthase family. Group II subfamily. Mg(2+) serves as cofactor.

Its subcellular location is the cytoplasm. The catalysed reaction is sn-glycerol 1-phosphate + (2E,6E,10E)-geranylgeranyl diphosphate = sn-3-O-(geranylgeranyl)glycerol 1-phosphate + diphosphate. Its pathway is membrane lipid metabolism; glycerophospholipid metabolism. Prenyltransferase that catalyzes the transfer of the geranylgeranyl moiety of geranylgeranyl diphosphate (GGPP) to the C3 hydroxyl of sn-glycerol-1-phosphate (G1P). This reaction is the first ether-bond-formation step in the biosynthesis of archaeal membrane lipids. The chain is Geranylgeranylglyceryl phosphate synthase from Caldivirga maquilingensis (strain ATCC 700844 / DSM 13496 / JCM 10307 / IC-167).